Consider the following 71-residue polypeptide: UPF0346 protein MGAS2096_Spy0401 (71 aa).

This sequence belongs to the UPF0346 family.

This is UPF0346 protein MGAS2096_Spy0401 from Streptococcus pyogenes serotype M12 (strain MGAS2096).